A 247-amino-acid polypeptide reads, in one-letter code: MHTQVLFEHPLNEKMRTWLRIEFLIQQLSINLPIADHAGALHFFRNISDLLDVFERGEVRTELLKELERQQRKLQAWVEVPGVDQDRIEALRQQLKSAGSVLISAPRIGQQLREDRLIALVRQRLSIPGGCCSFDLPTLHIWLHLQQAQRDAQIESWLASLNPLTQALTLVLDLIRNSAPFRKQTSLNGFYQDNGDDADLLRLMLMLDSQLYPQISGHKSRFAIRFMPLDSENGLVPERLDFELACC.

This sequence belongs to the ZapD family. As to quaternary structure, interacts with FtsZ.

It is found in the cytoplasm. Cell division factor that enhances FtsZ-ring assembly. Directly interacts with FtsZ and promotes bundling of FtsZ protofilaments, with a reduction in FtsZ GTPase activity. The polypeptide is Cell division protein ZapD (Salmonella agona (strain SL483)).